A 432-amino-acid chain; its full sequence is Asparagine--tRNA ligase (432 aa).

This sequence belongs to the class-II aminoacyl-tRNA synthetase family. In terms of assembly, homodimer.

The protein resides in the cytoplasm. The enzyme catalyses tRNA(Asn) + L-asparagine + ATP = L-asparaginyl-tRNA(Asn) + AMP + diphosphate + H(+). The sequence is that of Asparagine--tRNA ligase from Lactobacillus johnsonii (strain CNCM I-12250 / La1 / NCC 533).